The following is a 146-amino-acid chain: Hut operon positive regulatory protein (146 aa).

It belongs to the HutP family. In terms of assembly, homohexamer.

In terms of biological role, antiterminator that binds to cis-acting regulatory sequences on the mRNA in the presence of histidine, thereby suppressing transcription termination and activating the hut operon for histidine utilization. The polypeptide is Hut operon positive regulatory protein (Bacillus cereus (strain AH820)).